The primary structure comprises 166 residues: MKILFLSANEFEDVELIYPYHRLKEEGHEVYIASFEKGVITGKHGYSVKVDLTFDEVNPDEFDALVLPGGRAPERVRLNEKAVEIARKMFTEGKPVATICHGPQILISAGVLKGRKGTSYIGIRDDMINAGVEWIDREVVVDGNWVSSRHPGDLYAWMREFVKLLK.

In terms of domain architecture, PfpI endopeptidase spans 1 to 166 (MKILFLSANE…WMREFVKLLK (166 aa)). The Nucleophile role is filled by Cys100. The active site involves His101.

It belongs to the peptidase C56 family. In terms of assembly, homooligomer. Exists in two functional species: the predominant form is a homohexamer that comprises about 90% of the total activity, and the minor form is trimeric.

It localises to the cytoplasm. It carries out the reaction N(omega)-(1-hydroxy-2-oxopropyl)-L-arginyl-[protein] + H2O = lactate + L-arginyl-[protein] + H(+). It catalyses the reaction N(6)-(1-hydroxy-2-oxopropyl)-L-lysyl-[protein] + H2O = lactate + L-lysyl-[protein] + H(+). The catalysed reaction is S-(1-hydroxy-2-oxopropyl)-L-cysteinyl-[protein] + H2O = lactate + L-cysteinyl-[protein] + H(+). The enzyme catalyses N(omega)-(1-hydroxy-2-oxoethyl)-L-arginyl-[protein] + H2O = L-arginyl-[protein] + glycolate + H(+). It carries out the reaction N(6)-(1-hydroxy-2-oxoethyl)-L-lysyl-[protein] + H2O = glycolate + L-lysyl-[protein] + H(+). It catalyses the reaction S-(1-hydroxy-2-oxoethyl)-L-cysteinyl-[protein] + H2O = glycolate + L-cysteinyl-[protein] + H(+). Deglycase that catalyzes the deglycation of the Maillard adducts formed between amino groups of proteins and reactive carbonyl groups of glyoxals. Thus, functions as a protein deglycase that repairs methylglyoxal- and glyoxal-glycated proteins, and releases repaired proteins and lactate or glycolate, respectively. Deglycates cysteine, arginine and lysine residues in proteins, and thus reactivates these proteins by reversing glycation by glyoxals. Thus, was shown to afford full protection against glycation of thioredoxin by glyoxal. Acts on early glycation intermediates (hemithioacetals and aminocarbinols), preventing the formation of advanced glycation endproducts (AGE) that cause irreversible damage. Prevents acrylamide formation in asparagine/glyoxal and asparagine/sugar mixtures, likely by degrading asparagine/glyoxal Maillard adducts formed at high temperatures. Also displays proteolytic activity. Cleaves at the carboxyl side of both basic and hydrophobic residues in the P1 position, indicating trypsin- and chymotrypsin-like specificities. This is Deglycase PfpI from Pyrococcus furiosus (strain ATCC 43587 / DSM 3638 / JCM 8422 / Vc1).